A 193-amino-acid polypeptide reads, in one-letter code: Adenylate kinase (193 aa).

Position 11 to 16 (11 to 16) interacts with ATP; the sequence is GAGKGT. The tract at residues 31 to 60 is NMP; sequence STGDLLRAEVKAQTPLGCQAKVYMDAGELV. Residues T32, R37, 58 to 60, 85 to 88, and Q92 each bind AMP; these read ELV and GFPR. The interval 126 to 136 is LID; sequence ARGKEQGRSDD. R127 is an ATP binding site. Positions 133 and 145 each coordinate AMP. Q173 is a binding site for ATP.

This sequence belongs to the adenylate kinase family. As to quaternary structure, monomer.

It localises to the cytoplasm. It catalyses the reaction AMP + ATP = 2 ADP. It functions in the pathway purine metabolism; AMP biosynthesis via salvage pathway; AMP from ADP: step 1/1. Its function is as follows. Catalyzes the reversible transfer of the terminal phosphate group between ATP and AMP. Plays an important role in cellular energy homeostasis and in adenine nucleotide metabolism. This Synechococcus sp. (strain JA-2-3B'a(2-13)) (Cyanobacteria bacterium Yellowstone B-Prime) protein is Adenylate kinase.